The chain runs to 491 residues: ATP synthase subunit beta, chloroplastic (491 aa).

Residue G172–T179 coordinates ATP.

This sequence belongs to the ATPase alpha/beta chains family. F-type ATPases have 2 components, CF(1) - the catalytic core - and CF(0) - the membrane proton channel. CF(1) has five subunits: alpha(3), beta(3), gamma(1), delta(1), epsilon(1). CF(0) has four main subunits: a(1), b(1), b'(1) and c(9-12).

The protein localises to the plastid. It localises to the chloroplast thylakoid membrane. It catalyses the reaction ATP + H2O + 4 H(+)(in) = ADP + phosphate + 5 H(+)(out). Its function is as follows. Produces ATP from ADP in the presence of a proton gradient across the membrane. The catalytic sites are hosted primarily by the beta subunits. This Pisum sativum (Garden pea) protein is ATP synthase subunit beta, chloroplastic.